The sequence spans 352 residues: N-acetyl-gamma-glutamyl-phosphate reductase (352 aa).

Cysteine 155 is an active-site residue.

Belongs to the NAGSA dehydrogenase family. Type 1 subfamily.

It localises to the cytoplasm. It catalyses the reaction N-acetyl-L-glutamate 5-semialdehyde + phosphate + NADP(+) = N-acetyl-L-glutamyl 5-phosphate + NADPH + H(+). Its pathway is amino-acid biosynthesis; L-arginine biosynthesis; N(2)-acetyl-L-ornithine from L-glutamate: step 3/4. Functionally, catalyzes the NADPH-dependent reduction of N-acetyl-5-glutamyl phosphate to yield N-acetyl-L-glutamate 5-semialdehyde. The polypeptide is N-acetyl-gamma-glutamyl-phosphate reductase (Synechococcus elongatus (strain ATCC 33912 / PCC 7942 / FACHB-805) (Anacystis nidulans R2)).